We begin with the raw amino-acid sequence, 468 residues long: Na(+)/H(+) antiporter NhaA 2 (468 aa).

The next 11 membrane-spanning stretches (helical) occupy residues 31–51 (FLHVQAASGIVLLIATAVALA), 82–102 (LHFWINDGLMTIFFFVVGLEI), 118–138 (VLPVAAALGGMLFPALIYLAL), 147–167 (GWGVPMATDIAFAVGALALLG), 176–196 (VLLLALAIIDDIGAILVIAVF), 199–219 (SSISVTGFGLVAVGIAGVLAL), 226–246 (SPVVYAAAGVVIWAGLLSAGV), 321–341 (PWVAYGIMPLFALANAGVSLG), 353–373 (LLLGVVFGLTMGKPLGIMVAC), 393–413 (VLVVGCVAGIGFTMAIFVAGL), and 422–442 (GVAKLAVLLGSLISALVAMAV).

Belongs to the NhaA Na(+)/H(+) (TC 2.A.33) antiporter family.

It localises to the cell inner membrane. The enzyme catalyses Na(+)(in) + 2 H(+)(out) = Na(+)(out) + 2 H(+)(in). In terms of biological role, na(+)/H(+) antiporter that extrudes sodium in exchange for external protons. The chain is Na(+)/H(+) antiporter NhaA 2 from Sorangium cellulosum (strain So ce56) (Polyangium cellulosum (strain So ce56)).